We begin with the raw amino-acid sequence, 143 residues long: Small ribosomal subunit protein uS12 (143 aa).

Basic residues predominate over residues 1-19 (MGKPRGIRTARKHVNHRRE). Positions 1-21 (MGKPRGIRTARKHVNHRREQR) are disordered. Pro62 is subject to Hydroxyproline.

This sequence belongs to the universal ribosomal protein uS12 family. Component of the 40S small ribosomal subunit.

The protein resides in the cytoplasm. It is found in the cytosol. It localises to the rough endoplasmic reticulum. This Papilio dardanus (African swallowtail butterfly) protein is Small ribosomal subunit protein uS12 (RpS23).